Consider the following 212-residue polypeptide: ATP-dependent Clp protease proteolytic subunit (212 aa).

Ser-109 acts as the Nucleophile in catalysis. His-134 is a catalytic residue.

Belongs to the peptidase S14 family. In terms of assembly, fourteen ClpP subunits assemble into 2 heptameric rings which stack back to back to give a disk-like structure with a central cavity, resembling the structure of eukaryotic proteasomes.

It is found in the cytoplasm. It catalyses the reaction Hydrolysis of proteins to small peptides in the presence of ATP and magnesium. alpha-casein is the usual test substrate. In the absence of ATP, only oligopeptides shorter than five residues are hydrolyzed (such as succinyl-Leu-Tyr-|-NHMec, and Leu-Tyr-Leu-|-Tyr-Trp, in which cleavage of the -Tyr-|-Leu- and -Tyr-|-Trp bonds also occurs).. Its function is as follows. Cleaves peptides in various proteins in a process that requires ATP hydrolysis. Has a chymotrypsin-like activity. Plays a major role in the degradation of misfolded proteins. In Bdellovibrio bacteriovorus (strain ATCC 15356 / DSM 50701 / NCIMB 9529 / HD100), this protein is ATP-dependent Clp protease proteolytic subunit.